A 320-amino-acid chain; its full sequence is MENRNTFSWVKEQMTRSISVSIMIYVITRTSISNAYPIFAQQGYENPREATGRIVCANCHLANKPVDIEVPQAVLPDTVFEAVLRIPYDMQLKQVLANGKKGGLNVGAVLILPEGFELAPPDRISPELKEKIGNLSFQSYRPNKKNILVIGPVPGKKYSEIVFPILSPDPAMKKDVHFLKYPIYVGGNRGRGQIYPDGSKSNNTVYNATSTGVVRKILRKEKGGYEISIVDASDGRQVIDLIPPGPELLVSEGESIKLDQPLTSNPNVGGFGQGDAEIVLQDPLRVQGLLFFFASVILAQVFLVLKKKQFEKVQLYEMNF.

The signal sequence occupies residues 1-35 (MENRNTFSWVKEQMTRSISVSIMIYVITRTSISNA). Heme contacts are provided by Tyr36, Cys56, Cys59, and His60. The chain crosses the membrane as a helical span at residues 286 to 306 (VQGLLFFFASVILAQVFLVLK).

It belongs to the cytochrome f family. As to quaternary structure, the 4 large subunits of the cytochrome b6-f complex are cytochrome b6, subunit IV (17 kDa polypeptide, petD), cytochrome f and the Rieske protein, while the 4 small subunits are PetG, PetL, PetM and PetN. The complex functions as a dimer. It depends on heme as a cofactor.

The protein localises to the plastid. It is found in the chloroplast thylakoid membrane. Component of the cytochrome b6-f complex, which mediates electron transfer between photosystem II (PSII) and photosystem I (PSI), cyclic electron flow around PSI, and state transitions. The chain is Cytochrome f from Oryza nivara (Indian wild rice).